A 102-amino-acid polypeptide reads, in one-letter code: MGEITPRSLPATNFTGSQFLSSSFCKSVSVLNIVFSAFKHTAEFPESLFRRSPRERGSVFFVTINFEKGSLLCIVVDGRITSLPLGFCDKSVENIFMIWFFY.

This is an uncharacterized protein from Saccharomyces cerevisiae (strain ATCC 204508 / S288c) (Baker's yeast).